The sequence spans 898 residues: Endoplasmic reticulum metallopeptidase 1 (898 aa).

An N-acetylmethionine modification is found at Met1. The tract at residues 1–55 (MEWSSESAAVRRHRGTAERREGEAAASHRQREASAQEDAKGVGRMWGKTENGGGS) is disordered. The Cytoplasmic portion of the chain corresponds to 1–66 (MEWSSESAAV…VAKTALSEAR (66 aa)). Residues 29–41 (RQREASAQEDAKG) show a composition bias toward basic and acidic residues. Residues 67–87 (TALALALYLLALRALVQLSLQ) traverse the membrane as a helical segment. Residues 88–393 (RLVLSRTSGL…SSSEYRHGSM (306 aa)) lie on the Lumenal side of the membrane. Asn176 carries an N-linked (GlcNAc...) asparagine glycan. Cys198 and Cys216 form a disulfide bridge. Zn(2+)-binding residues include His199 and Asp211. Residue Glu245 is the Proton acceptor of the active site. Zn(2+) is bound by residues Glu246, Glu272, and His348. A helical membrane pass occupies residues 394–414 (VFFDVLGLLVIAYPSRVGSII). Residues 415–451 (NYMVVMAVVLYLGKKLLRPKHRNANYMRDFLCGLGIT) lie on the Cytoplasmic side of the membrane. The helical transmembrane segment at 452–472 (FISWFTSLVTVLIIAVFISLI) threads the bilayer. At 473 to 480 (GQSLSWYN) the chain is on the lumenal side. Residues 481–501 (YFYIAVCLYGTATVAKIIFIH) traverse the membrane as a helical segment. Over 502–515 (TLAKRFYYMNASDL) the chain is Cytoplasmic. A helical membrane pass occupies residues 516-538 (YLGELFFDTSLFVHCAFLVALTY). Topologically, residues 539-542 (QGFC) are lumenal. The chain crosses the membrane as a helical span at residues 543–562 (SAFMSAVWVVFPLLTKLCVY). The Cytoplasmic segment spans residues 563–573 (KDFKKHGAQGR). The chain crosses the membrane as a helical span at residues 574–594 (FVALYLLGMFIPYLYGLYLIW). The Lumenal portion of the chain corresponds to 595–615 (AVFEMFTPILGRSGSEIPPDV). The chain crosses the membrane as a helical span at residues 616-636 (VLASILAVCVMILSSYFITFI). The Cytoplasmic segment spans residues 637-645 (YLVNSTKKT). A helical transmembrane segment spans residues 646–666 (ILTLILVCAVTFLLVCSGAFF). Over 667 to 898 (PYSSNPESPK…WVSTYSLFVF (232 aa)) the chain is Lumenal. The N-linked (GlcNAc...) asparagine glycan is linked to Asn724.

The protein belongs to the peptidase M28 family. Zn(2+) is required as a cofactor.

Its subcellular location is the endoplasmic reticulum membrane. Its function is as follows. Within the ovary, required for the organization of somatic cells and oocytes into discrete follicular structures. This Mus musculus (Mouse) protein is Endoplasmic reticulum metallopeptidase 1.